The chain runs to 410 residues: MKIYLVGGAVRDALLGQPAGDRDWVVVGADQARMEAQGFKPVGKDFPVFLHPRSGEEYALARTERKSGRGYRGFVVDADPLVTLEEDLLRRDFTINAIARDEDTGEFFDPYNGARDLQARVLRHVGPAFVEDPVRVLRAARFMARLAPLGFTIAPETAALMREMAASGELDSLVPERVWQELRRALTCAQPSAFLRTLHDTDGLRAILPEIDALYGVPQRAQFHPEVDTGIHQEMVSDMAARIAPGDALVGFAALTHDLGKALTPPEQWPRHIMHEQRGVAPLQALCERLKVPQDYRQLAVIACREHLNVHRLPELRDRTVHELLVRCDAFRRPERIAQLALVCEADKRGRLGSEEAAYPQGAELKRLHAAASAINARDLAADGLQGPQIGEALTKARIAAITAARKTSA.

Residues G8 and R11 each contribute to the ATP site. Residues G8 and R11 each contribute to the CTP site. Mg(2+) is bound by residues D21 and D23. The ATP site is built by R91, R138, and R141. Residues R91, R138, and R141 each coordinate CTP. One can recognise an HD domain in the interval 229 to 347; it reads TGIHQEMVSD…AQLALVCEAD (119 aa).

The protein belongs to the tRNA nucleotidyltransferase/poly(A) polymerase family. Bacterial CCA-adding enzyme type 1 subfamily. As to quaternary structure, monomer. Can also form homodimers and oligomers. Mg(2+) is required as a cofactor. It depends on Ni(2+) as a cofactor.

It catalyses the reaction a tRNA precursor + 2 CTP + ATP = a tRNA with a 3' CCA end + 3 diphosphate. The catalysed reaction is a tRNA with a 3' CCA end + 2 CTP + ATP = a tRNA with a 3' CCACCA end + 3 diphosphate. In terms of biological role, catalyzes the addition and repair of the essential 3'-terminal CCA sequence in tRNAs without using a nucleic acid template. Adds these three nucleotides in the order of C, C, and A to the tRNA nucleotide-73, using CTP and ATP as substrates and producing inorganic pyrophosphate. tRNA 3'-terminal CCA addition is required both for tRNA processing and repair. Also involved in tRNA surveillance by mediating tandem CCA addition to generate a CCACCA at the 3' terminus of unstable tRNAs. While stable tRNAs receive only 3'-terminal CCA, unstable tRNAs are marked with CCACCA and rapidly degraded. The polypeptide is Multifunctional CCA protein (Xanthomonas oryzae pv. oryzae (strain MAFF 311018)).